The primary structure comprises 311 residues: Energy-coupling factor transporter ATP-binding protein EcfA2 (311 aa).

The 263-residue stretch at 3–265 (IKLKDVKFTF…IAFLEENNLQ (263 aa)) folds into the ABC transporter domain. Residue 40–47 (GQTGSGKT) participates in ATP binding.

The protein belongs to the ABC transporter superfamily. Energy-coupling factor EcfA family. In terms of assembly, forms a stable energy-coupling factor (ECF) transporter complex composed of 2 membrane-embedded substrate-binding proteins (S component), 2 ATP-binding proteins (A component) and 2 transmembrane proteins (T component).

The protein localises to the cell membrane. ATP-binding (A) component of a common energy-coupling factor (ECF) ABC-transporter complex. Unlike classic ABC transporters this ECF transporter provides the energy necessary to transport a number of different substrates. The polypeptide is Energy-coupling factor transporter ATP-binding protein EcfA2 (Mycoplasmopsis synoviae (strain 53) (Mycoplasma synoviae)).